A 383-amino-acid polypeptide reads, in one-letter code: Na(+)/H(+) antiporter (383 aa).

12 helical membrane-spanning segments follow: residues 1–21 (MEFI…SHIS), 24–44 (FGIP…QAGL), 51–71 (ILVH…AGLE), 83–103 (PGMF…WLTG), 112–132 (EAIF…VEVL), 145–165 (TILG…SFSL), 186–206 (LFYF…LMSL), 216–236 (IIIM…LIGL), 262–282 (VEAL…GLEV), 291–311 (ILFI…GGYI), 323–343 (ALMV…ILQI), and 353–373 (HYYS…PLIL).

The protein belongs to the monovalent cation:proton antiporter 2 (CPA2) transporter (TC 2.A.37) family.

The protein localises to the cell membrane. Na(+)/H(+) antiporter that extrudes sodium in exchange for external protons. Can also transport lithium. This is Na(+)/H(+) antiporter (napA) from Enterococcus hirae.